The chain runs to 335 residues: Non-structural protein P9-1 (335 aa).

Residues Phe27–Gln42 show a composition bias toward low complexity. The tract at residues Phe27–Thr48 is disordered.

The sequence is that of Non-structural protein P9-1 (S9) from Fiji disease virus (isolate Sugarcane) (FDV).